The chain runs to 485 residues: Taxane 13-alpha-hydroxylase (485 aa).

Residue Cys-431 participates in heme binding.

It belongs to the cytochrome P450 family. Requires heme as cofactor.

The enzyme catalyses taxa-4(20),11-dien-5alpha-ol + reduced [NADPH--hemoprotein reductase] + O2 = taxa-4(20),11-dien-5alpha,13alpha-diol + oxidized [NADPH--hemoprotein reductase] + H2O + H(+). The protein operates within alkaloid biosynthesis; taxol biosynthesis. Its function is as follows. Involved in the transformation of a taxadienyl acetate by hydroxylation at C13 to yield taxadien-5-alpha-acetoxy-13-alpha-ol. This is Taxane 13-alpha-hydroxylase (CYP725A2) from Taxus cuspidata (Japanese yew).